Here is a 208-residue protein sequence, read N- to C-terminus: Uracil phosphoribosyltransferase (208 aa).

5-phospho-alpha-D-ribose 1-diphosphate is bound by residues arginine 78, arginine 103, and aspartate 130–serine 138. Residues isoleucine 193 and glycine 198–alanine 200 each bind uracil. Position 199 (aspartate 199) interacts with 5-phospho-alpha-D-ribose 1-diphosphate.

The protein belongs to the UPRTase family. Mg(2+) is required as a cofactor.

It carries out the reaction UMP + diphosphate = 5-phospho-alpha-D-ribose 1-diphosphate + uracil. It functions in the pathway pyrimidine metabolism; UMP biosynthesis via salvage pathway; UMP from uracil: step 1/1. With respect to regulation, allosterically activated by GTP. In terms of biological role, catalyzes the conversion of uracil and 5-phospho-alpha-D-ribose 1-diphosphate (PRPP) to UMP and diphosphate. The sequence is that of Uracil phosphoribosyltransferase from Acholeplasma laidlawii (strain PG-8A).